Here is a 351-residue protein sequence, read N- to C-terminus: 3-dehydroquinate synthase (351 aa).

Residues 60–65, 94–98, 118–119, Lys-131, Lys-140, and 158–161 contribute to the NAD(+) site; these read DGEEYK, GVISD, TT, and FLKT. Residues Glu-173, His-239, and His-256 each contribute to the Zn(2+) site.

This sequence belongs to the sugar phosphate cyclases superfamily. Dehydroquinate synthase family. Requires Co(2+) as cofactor. The cofactor is Zn(2+). It depends on NAD(+) as a cofactor.

It is found in the cytoplasm. It catalyses the reaction 7-phospho-2-dehydro-3-deoxy-D-arabino-heptonate = 3-dehydroquinate + phosphate. It functions in the pathway metabolic intermediate biosynthesis; chorismate biosynthesis; chorismate from D-erythrose 4-phosphate and phosphoenolpyruvate: step 2/7. Functionally, catalyzes the conversion of 3-deoxy-D-arabino-heptulosonate 7-phosphate (DAHP) to dehydroquinate (DHQ). This is 3-dehydroquinate synthase from Campylobacter jejuni subsp. jejuni serotype O:23/36 (strain 81-176).